The sequence spans 323 residues: Putative CDC123-like protein L884 (323 aa).

It belongs to the CDC123 family.

The polypeptide is Putative CDC123-like protein L884 (Acanthamoeba polyphaga mimivirus (APMV)).